The following is a 585-amino-acid chain: Arginine--tRNA ligase (585 aa).

The 'HIGH' region motif lies at 126-136 (PNIAKEMHVGH).

The protein belongs to the class-I aminoacyl-tRNA synthetase family. Monomer.

It is found in the cytoplasm. It catalyses the reaction tRNA(Arg) + L-arginine + ATP = L-arginyl-tRNA(Arg) + AMP + diphosphate. This Trichodesmium erythraeum (strain IMS101) protein is Arginine--tRNA ligase.